The following is a 472-amino-acid chain: FAD-dependent monooxygenase dpmaE (472 aa).

The signal sequence occupies residues 1–24 (MSQRQFKVIIIGGSVTGLTLAHSL). Glu35, Gly49, and Arg108 together coordinate FAD. N-linked (GlcNAc...) asparagine glycosylation is found at Asn128 and Asn179. Residues Asp305 and Ala318 each coordinate FAD. A glycan (N-linked (GlcNAc...) asparagine) is linked at Asn369. Residues 440–460 (LLPLMFTLPLLYFGLSWIVGI) traverse the membrane as a helical segment.

It belongs to the paxM FAD-dependent monooxygenase family. It depends on FAD as a cofactor.

The protein resides in the membrane. It participates in secondary metabolite biosynthesis; terpenoid biosynthesis. Its function is as follows. FAD-dependent monooxygenase; part of the gene cluster that mediates the biosynthesis of the diterpenoid pyrones subglutinols A and B. The first step of the pathway is the synthesis of the alpha-pyrone moiety by the polyketide synthase dpmaA via condensation of one acetyl-CoA starter unit with 3 malonyl-CoA units and 2 methylations. The alpha-pyrone is then combined with geranylgeranyl pyrophosphate (GGPP) formed by the GGPP synthase dpmaD through the action of the prenyltransferase dpmaC to yield a linear alpha-pyrone diterpenoid. Subsequent steps in the diterpenoid pyrone biosynthetic pathway involve the decalin core formation, which is initiated by the epoxidation of the C10-C11 olefin by the FAD-dependent oxidoreductase dpmaE, and is followed by a cyclization cascade catalyzed by the terpene cyclase dpmaB. The dehydrogenase dpmaF is then involved in tetrahydrofuran (THF) ring formation at the C5 unit to complete the formation of subglutinols A and B. This is FAD-dependent monooxygenase dpmaE from Metarhizium anisopliae (Entomophthora anisopliae).